The following is a 623-amino-acid chain: MPHSDELDSRDVLSVSGLNIAFHHEGQQIDAVRNVSLRLKRGETLAIVGESGSGKSVTALALMRLIEQSGANVRCGEMLLRRRNRQVIELSEQSDAQMRRVRGADIAMIFQEPMTSLNPVFTVGEQIAESIRLHQGASHEEALAEAKRMLDQVRIPESQAILSRYPHQLSGGMRQRVMIAMALSCRPAVLIADEPTTALDVTIQAQILQLIKVLQQEMSMGVIFITHDMGVVADIADRVLVMYQGEAVETGSVEQIFHAPTHPYTQTLLAAVPQLGAMRGHSLPRRFPLISADEPALYESQIEQDTVVEGEPILQVRGLVTRFPLRSGLFNRVTREVHAVENISFDLWPGETLSLVGESGSGKSTTGRALLRLVESRQGEIIFNGQRIDSLSAGKLQPLRRDIQCIFQDPYASLDPRQTVGYSIMEPLRIHGLGQGDAAAKRVAWLLERVGLRPEHAWRYPHEFSGGQRQRICIARALALNPKVIIADEAVSALDVSVRGQIINLLLDLQREMGIAYLFISHDMAVVERISHRVAVMYLGQIVEMGPRRAVFENPQHPYTRKLMAAVPVADPSRHRPRRVLLSDDIPSNIHKRGEETPAVSLQLVGPGHYVARPLQDNALSRL.

ABC transporter domains are found at residues 15-269 (VSGL…QTLL) and 325-564 (LRSG…RKLM). ATP-binding positions include 49–56 (GESGSGKS) and 357–364 (GESGSGKS).

Belongs to the ABC transporter superfamily. Glutathione importer (TC 3.A.1.5.11) family. As to quaternary structure, the complex is composed of two ATP-binding proteins (GsiA), two transmembrane proteins (GsiC and GsiD) and a solute-binding protein (GsiB).

The protein localises to the cell inner membrane. It carries out the reaction glutathione(out) + ATP + H2O = glutathione(in) + ADP + phosphate + H(+). Functionally, part of the ABC transporter complex GsiABCD involved in glutathione import. Responsible for energy coupling to the transport system. This Salmonella paratyphi A (strain ATCC 9150 / SARB42) protein is Glutathione import ATP-binding protein GsiA.